We begin with the raw amino-acid sequence, 290 residues long: ATP synthase gamma chain (290 aa).

It belongs to the ATPase gamma chain family. As to quaternary structure, F-type ATPases have 2 components, CF(1) - the catalytic core - and CF(0) - the membrane proton channel. CF(1) has five subunits: alpha(3), beta(3), gamma(1), delta(1), epsilon(1). CF(0) has three main subunits: a, b and c.

Its subcellular location is the cell membrane. In terms of biological role, produces ATP from ADP in the presence of a proton gradient across the membrane. The gamma chain is believed to be important in regulating ATPase activity and the flow of protons through the CF(0) complex. The chain is ATP synthase gamma chain from Buchnera aphidicola subsp. Diuraphis noxia.